Consider the following 359-residue polypeptide: Hereditary hemochromatosis protein homolog (359 aa).

The first 24 residues, 1-24 (MSLSAGLPVRPLLLLLLLLWSVAP), serve as a signal peptide directing secretion. Positions 25 to 126 (QALPPRSHSL…KVTKLGVVSE (102 aa)) are alpha-1. Topologically, residues 25–318 (QALPPRSHSL…WEPLQSQAMI (294 aa)) are extracellular. Residues Asn114, Asn142, Asn166, and Asn246 are each glycosylated (N-linked (GlcNAc...) asparagine). An alpha-2 region spans residues 127–217 (SHILQVVLGC…ELGRGVLGQQ (91 aa)). Cystine bridges form between Cys136/Cys199 and Cys237/Cys294. Residues 218–309 (VPTLVKVTRH…GLDQPLTASW (92 aa)) are alpha-3. Residues 219–308 (PTLVKVTRHW…PGLDQPLTAS (90 aa)) form the Ig-like C1-type domain. The interval 310 to 318 (EPLQSQAMI) is connecting peptide. A helical membrane pass occupies residues 319-339 (IGIISGVTVCAIFLVGILFLI). The Cytoplasmic segment spans residues 340–359 (LRKRKASGGTMGGYVLTDCE).

This sequence belongs to the MHC class I family. Binds TFR through the extracellular domain in a pH-dependent manner.

The protein localises to the cell membrane. In terms of biological role, binds to transferrin receptor (TFR) and reduces its affinity for iron-loaded transferrin. The sequence is that of Hereditary hemochromatosis protein homolog (Hfe) from Mus musculus (Mouse).